A 432-amino-acid polypeptide reads, in one-letter code: Glutamyl-tRNA reductase (432 aa).

Substrate contacts are provided by residues 55 to 58 (TCNR), Ser-114, 119 to 121 (ETQ), and Gln-125. The Nucleophile role is filled by Cys-56. An NADP(+)-binding site is contributed by 194-199 (GAGEMI).

Belongs to the glutamyl-tRNA reductase family. Homodimer.

It catalyses the reaction (S)-4-amino-5-oxopentanoate + tRNA(Glu) + NADP(+) = L-glutamyl-tRNA(Glu) + NADPH + H(+). It functions in the pathway porphyrin-containing compound metabolism; protoporphyrin-IX biosynthesis; 5-aminolevulinate from L-glutamyl-tRNA(Glu): step 1/2. Its function is as follows. Catalyzes the NADPH-dependent reduction of glutamyl-tRNA(Glu) to glutamate 1-semialdehyde (GSA). The chain is Glutamyl-tRNA reductase from Burkholderia pseudomallei (strain 1710b).